Reading from the N-terminus, the 589-residue chain is Arginine--tRNA ligase (589 aa).

The short motif at Ala123 to His133 is the 'HIGH' region element.

This sequence belongs to the class-I aminoacyl-tRNA synthetase family. In terms of assembly, monomer.

Its subcellular location is the cytoplasm. It catalyses the reaction tRNA(Arg) + L-arginine + ATP = L-arginyl-tRNA(Arg) + AMP + diphosphate. The polypeptide is Arginine--tRNA ligase (Hyphomonas neptunium (strain ATCC 15444)).